The sequence spans 294 residues: Elongation factor Ts (294 aa).

Residues 82–85 (TDFV) are involved in Mg(2+) ion dislocation from EF-Tu.

It belongs to the EF-Ts family.

It is found in the cytoplasm. Its function is as follows. Associates with the EF-Tu.GDP complex and induces the exchange of GDP to GTP. It remains bound to the aminoacyl-tRNA.EF-Tu.GTP complex up to the GTP hydrolysis stage on the ribosome. This is Elongation factor Ts from Psychrobacter cryohalolentis (strain ATCC BAA-1226 / DSM 17306 / VKM B-2378 / K5).